The following is a 1318-amino-acid chain: Putative tetratricopeptide repeat protein 41 (1318 aa).

TPR repeat units lie at residues 399–432 (TQLETDILNEDSDGLVFSFLVEVFIASISLKPCI), 653–684 (WVQEKPNGLLYFWHQSLSAVEHKLLGVITPVE), 817–850 (CRLMFFIGSFLKFMGKTNEAEELFLSVEDMLVQS), 858–891 (LKVQNAIGELYLETGMTQEGFQYFQKAWSSMLRL), 991–1027 (MEFLADLLFFPQRDSKKSQRKQVLKYYKQVIKIKENA), and 1045–1082 (SDTLCKLAGHLLASDSCHHVMIEAVGYLYRSVDLRVIH).

It is found in the cytoplasm. The sequence is that of Putative tetratricopeptide repeat protein 41 from Homo sapiens (Human).